The primary structure comprises 134 residues: Cytochrome b5 (134 aa).

Alanine 2 carries the post-translational modification N-acetylalanine. Residues lysine 7, lysine 10, and lysine 19 each carry the N6-acetyllysine modification. The Cytochrome b5 heme-binding domain occupies 9 to 85 (VKYYTLEEIQ…SKTFIIGELH (77 aa)). Heme contacts are provided by histidine 44 and histidine 68. Residues 109–131 (WWTNWLIPAISALFVALIYHLYT) traverse the membrane as a helical segment.

Belongs to the cytochrome b5 family.

It localises to the endoplasmic reticulum membrane. It is found in the microsome membrane. Functionally, cytochrome b5 is a membrane-bound hemoprotein functioning as an electron carrier for several membrane-bound oxygenases. This Bos taurus (Bovine) protein is Cytochrome b5 (CYB5A).